A 291-amino-acid polypeptide reads, in one-letter code: Phosphatidylglycerol--prolipoprotein diacylglyceryl transferase (291 aa).

7 helical membrane passes run 21-41 (VSLHWYGLMYLVGFVFAMWLA), 60-80 (LLYAGFLGVFLGGRIGYVLFY), 96-116 (WDGGMSFHGGLIGVICVMIWF), 130-150 (FIAPLIPFGLGAGRLGNFING), 198-218 (SQLYELFLEGIVLFIILNLFI), 225-245 (GAVSGLFLIGYGAFRIIVEFF), and 260-280 (ISMGQILSIPMIVAGAAMMIW). Residue R143 coordinates a 1,2-diacyl-sn-glycero-3-phospho-(1'-sn-glycerol).

This sequence belongs to the Lgt family.

It localises to the cell inner membrane. It carries out the reaction L-cysteinyl-[prolipoprotein] + a 1,2-diacyl-sn-glycero-3-phospho-(1'-sn-glycerol) = an S-1,2-diacyl-sn-glyceryl-L-cysteinyl-[prolipoprotein] + sn-glycerol 1-phosphate + H(+). The protein operates within protein modification; lipoprotein biosynthesis (diacylglyceryl transfer). Catalyzes the transfer of the diacylglyceryl group from phosphatidylglycerol to the sulfhydryl group of the N-terminal cysteine of a prolipoprotein, the first step in the formation of mature lipoproteins. The polypeptide is Phosphatidylglycerol--prolipoprotein diacylglyceryl transferase (Cronobacter sakazakii (strain ATCC BAA-894) (Enterobacter sakazakii)).